A 186-amino-acid polypeptide reads, in one-letter code: Hydra actinoporin-like toxin 1 (186 aa).

The signal sequence occupies residues Met-1–Ala-18. Residues Lys-29 to Val-48 form an N-terminal region region. The Cell attachment site, crucial for protein stability motif lies at Arg-158–Gly-160.

The protein belongs to the actinoporin family. HALT subfamily. Octamer or nonamer in membranes. Monomer in the soluble state. In vitro, interacts with folate receptor alpha (of target organism). In terms of tissue distribution, expressed female germline during oogenesis.

The protein localises to the nematocyst. The protein resides in the secreted. Its subcellular location is the target cell membrane. Functionally, pore-forming protein that forms hydrophilic pores and causes cytolysis. Compared to equinatoxin-2 (AC P61914), it reveals lower cytolysis activity (5-12-fold difference, tested on erythrocytes), a larger pore size (probably 2-3 nm) and different affinity to membrane lipids (100-fold lower affinity to sphingomyelin). Binds to sulfatides (SFT) as well as to the two sphingolipids, lysophosphatidic acid (LPA) and sphingosine-1-phosphate (S1P). It seems to bind more strongly to LPA than to S1P and SFT. Shows cytolytic activity on HeLa cells, with a different potency than its paralogs (from most potent to less potent: HALT-4&gt;HALT-6~HALT-1&gt;HALT-3&gt;HALT-7&gt;HALT-2). Pore formation is a multi-step process that involves specific recognition of membrane lipid by a protein aromatic residues rich region, firm binding to the membrane (mainly driven by hydrophobic interactions) accompanied by the transfer of the N-terminal region to the lipid-water interface and finally pore formation after oligomerization of monomers. In vitro, binds to the folate receptor alpha (FOLR1), a GPI-anchored membrane protein that plays a major role in the uptake of folate/folic acid into cells via endocytosis, suggesting a possible involvement of this receptor in the mechanism of HALT-1-induced cell lysis. In vivo, does not cause visible paralysis in larvae of the blowfly Sarcophaga faculata, the most common arthropod prey of Hydra. The polypeptide is Hydra actinoporin-like toxin 1 (Hydra vulgaris (Hydra)).